The sequence spans 280 residues: Divalent cation/proton antiporter GDT1 (280 aa).

Over 1 to 3 the chain is Cytoplasmic; sequence MGN. The helical transmembrane segment at 4–24 threads the bilayer; that stretch reads MIKKASLIALLPLFTAAAAAA. The Vacuolar segment spans residues 25–45; that stretch reads TDAETSMESGSSSHLKSFLMS. Residues 46-66 traverse the membrane as a helical segment; the sequence is VSMIGLSEIGDKTFLIAALMA. Residues 67–71 are Cytoplasmic-facing; that stretch reads MRHKR. A helical transmembrane segment spans residues 72 to 92; it reads VLVFSAAATSLAIMTILSGVV. At 93 to 104 the chain is on the vacuolar side; it reads GHSAVAFLSERY. Residues 105–125 traverse the membrane as a helical segment; that stretch reads TAFFAGILFLVFGYKLTMEGL. Topologically, residues 126 to 183 are cytoplasmic; that stretch reads EMSKDAGVEEEMAEVEEEIAIKDMNQDMDDVEKGGDTAYDKQLKNASIGKKIVHRIRE. A helical transmembrane segment spans residues 184–204; that stretch reads LASFMFSPVWVQIFLMVFLGE. Topologically, residues 205 to 222 are vacuolar; that stretch reads LGDRSQISIIAMATDSDY. The helical transmembrane segment at 223–243 threads the bilayer; it reads WYVIAGAVIGHAICSGLAVVG. The Cytoplasmic segment spans residues 244 to 255; that stretch reads GKLLATRISIRT. The chain crosses the membrane as a helical span at residues 256 to 276; that stretch reads ITLASSLLFFIFALMYIYQAF. The Vacuolar segment spans residues 277–280; the sequence is TTQD.

The protein belongs to the GDT1 family.

The protein localises to the golgi apparatus. It localises to the cis-Golgi network membrane. It catalyses the reaction Ca(2+)(in) + n H(+)(out) = Ca(2+)(out) + n H(+)(in). It carries out the reaction Mn(2+)(in) + n H(+)(out) = Mn(2+)(out) + n H(+)(in). Divalent cation:proton antiporter that exchanges calcium or manganese ions for protons across the Golgi membrane. Mediates the reversible transport of calcium or manganese to the Golgi lumen driven by the proton gradient and possibly the membrane potential generated by V-ATPase. Provides calcium or manganese cofactors to resident Golgi enzymes and contributes to the maintenance of an acidic luminal Golgi pH required for proper functioning of the secretory pathway. The transport stoichiometry remains to be elucidated. In Saccharomyces cerevisiae (strain ATCC 204508 / S288c) (Baker's yeast), this protein is Divalent cation/proton antiporter GDT1.